We begin with the raw amino-acid sequence, 416 residues long: Tyrosine--tRNA ligase (416 aa).

A 'HIGH' region motif is present at residues 55 to 64 (PTGSEIHLGH). The 'KMSKS' region signature appears at 249-253 (KMSKS). Lysine 252 is an ATP binding site. In terms of domain architecture, S4 RNA-binding spans 352-416 (TKAFHLLSSI…GKKTFRRISN (65 aa)).

This sequence belongs to the class-I aminoacyl-tRNA synthetase family. TyrS type 2 subfamily. In terms of assembly, homodimer.

The protein resides in the cytoplasm. The catalysed reaction is tRNA(Tyr) + L-tyrosine + ATP = L-tyrosyl-tRNA(Tyr) + AMP + diphosphate + H(+). Functionally, catalyzes the attachment of tyrosine to tRNA(Tyr) in a two-step reaction: tyrosine is first activated by ATP to form Tyr-AMP and then transferred to the acceptor end of tRNA(Tyr). The sequence is that of Tyrosine--tRNA ligase from Prochlorococcus marinus (strain SARG / CCMP1375 / SS120).